Consider the following 398-residue polypeptide: Tyrosine--tRNA ligase (398 aa).

The short motif at 48–57 (PTGADIHLGH) is the 'HIGH' region element. The short motif at 235 to 239 (KMSKS) is the 'KMSKS' region element. Lysine 238 is a binding site for ATP. The S4 RNA-binding domain occupies 334–398 (VKLAYLLGAT…GKNKFVRLVL (65 aa)).

It belongs to the class-I aminoacyl-tRNA synthetase family. TyrS type 2 subfamily. In terms of assembly, homodimer.

The protein localises to the cytoplasm. The catalysed reaction is tRNA(Tyr) + L-tyrosine + ATP = L-tyrosyl-tRNA(Tyr) + AMP + diphosphate + H(+). Catalyzes the attachment of tyrosine to tRNA(Tyr) in a two-step reaction: tyrosine is first activated by ATP to form Tyr-AMP and then transferred to the acceptor end of tRNA(Tyr). This chain is Tyrosine--tRNA ligase, found in Trichormus variabilis (strain ATCC 29413 / PCC 7937) (Anabaena variabilis).